The following is a 143-amino-acid chain: Large ribosomal subunit protein uL11 (143 aa).

This sequence belongs to the universal ribosomal protein uL11 family. In terms of assembly, part of the ribosomal stalk of the 50S ribosomal subunit. Interacts with L10 and the large rRNA to form the base of the stalk. L10 forms an elongated spine to which L12 dimers bind in a sequential fashion forming a multimeric L10(L12)X complex. Post-translationally, one or more lysine residues are methylated.

Functionally, forms part of the ribosomal stalk which helps the ribosome interact with GTP-bound translation factors. This chain is Large ribosomal subunit protein uL11, found in Beutenbergia cavernae (strain ATCC BAA-8 / DSM 12333 / CCUG 43141 / JCM 11478 / NBRC 16432 / NCIMB 13614 / HKI 0122).